Here is a 211-residue protein sequence, read N- to C-terminus: ATP phosphoribosyltransferase (211 aa).

The protein belongs to the ATP phosphoribosyltransferase family. Short subfamily. In terms of assembly, heteromultimer composed of HisG and HisZ subunits.

The protein localises to the cytoplasm. The catalysed reaction is 1-(5-phospho-beta-D-ribosyl)-ATP + diphosphate = 5-phospho-alpha-D-ribose 1-diphosphate + ATP. The protein operates within amino-acid biosynthesis; L-histidine biosynthesis; L-histidine from 5-phospho-alpha-D-ribose 1-diphosphate: step 1/9. Its function is as follows. Catalyzes the condensation of ATP and 5-phosphoribose 1-diphosphate to form N'-(5'-phosphoribosyl)-ATP (PR-ATP). Has a crucial role in the pathway because the rate of histidine biosynthesis seems to be controlled primarily by regulation of HisG enzymatic activity. This chain is ATP phosphoribosyltransferase, found in Pseudomonas putida (strain ATCC 700007 / DSM 6899 / JCM 31910 / BCRC 17059 / LMG 24140 / F1).